Consider the following 523-residue polypeptide: Transcription factor MYB120 (523 aa).

2 HTH myb-type domains span residues 23–75 and 76–130; these read GVIL…ANHL and RPNL…KRLL. DNA-binding regions (H-T-H motif) lie at residues 51 to 75 and 103 to 126; these read WNAV…ANHL and WARM…NTRL. 4 disordered regions span residues 140–254, 332–373, 396–426, and 444–470; these read DIIP…YPTL, QTAT…SHYT, QIPQ…GAHR, and LASG…NNTN. Positions 147–167 are enriched in basic residues; the sequence is LHPHPHHQQQQQHNHHHHHHQ. Residues 175 to 185 show a composition bias toward polar residues; that stretch reads MYFQPQSSQRN. Low complexity-rich tracts occupy residues 202–212, 223–232, and 341–368; these read SSSSFTFHTTT, TPNTPSQLSS, and NPYS…PSFL. The segment covering 396-410 has biased composition (polar residues); sequence QIPQIDGFNNVNNFT.

In terms of tissue distribution, expressed in pollen grains and pollen tube. Mostly expressed in mature pollen grains, and, to a lower extent, in inflorescences and siliques.

The protein resides in the nucleus. In terms of biological role, transcription activator. Binds to 5'-CAACTGTC-3' and/or 5'-TAACAAA-3' motif in target gene promoter to promote their expression. Together with MYB97 and MYB101, functions as a male factor that controls pollen tube-synergid interaction in fertilization. Required for pollen tube growth arrest and sperm cell release in the female gametophyte, probably via the regulation of pollen tube-specific gene expression. This is Transcription factor MYB120 from Arabidopsis thaliana (Mouse-ear cress).